We begin with the raw amino-acid sequence, 610 residues long: Putative protein tag-250 (610 aa).

2 Tudor domains span residues 149-260 and 386-506; these read VALK…LLPP and MPMS…KIGG.

The protein is Putative protein tag-250 (tag-250) of Caenorhabditis elegans.